A 272-amino-acid chain; its full sequence is MNNRVHQGHFARKRFGQNFLNDQFVIDSIVSAIHPVPGEAVVEIGPGLGALTEPVAARMDHMTVIELDRDLAARLASHPQLKDKLTIHQQDAMKVNFSELSEQAGQPLRVFGNLPYNISTPLMFHLFSYTDAIRDMHFMLQKEVVNRLVAGPNSKAYGRLTVMAQYYCNVIPVLEVPPTAFTPAPKVDSAVVRLIPHVQMPHPVGDVRMLSRITTQAFNQRRKTVRNSLGDLFTSEQLIELGIDPILRAENISVAQYCKLANWLSAQSTPQK.

S-adenosyl-L-methionine contacts are provided by Asn18, Leu20, Gly45, Glu66, Asp91, and Asn113.

The protein belongs to the class I-like SAM-binding methyltransferase superfamily. rRNA adenine N(6)-methyltransferase family. RsmA subfamily.

It is found in the cytoplasm. It catalyses the reaction adenosine(1518)/adenosine(1519) in 16S rRNA + 4 S-adenosyl-L-methionine = N(6)-dimethyladenosine(1518)/N(6)-dimethyladenosine(1519) in 16S rRNA + 4 S-adenosyl-L-homocysteine + 4 H(+). Its function is as follows. Specifically dimethylates two adjacent adenosines (A1518 and A1519) in the loop of a conserved hairpin near the 3'-end of 16S rRNA in the 30S particle. May play a critical role in biogenesis of 30S subunits. The chain is Ribosomal RNA small subunit methyltransferase A from Yersinia pseudotuberculosis serotype O:1b (strain IP 31758).